Consider the following 245-residue polypeptide: 1-(5-phosphoribosyl)-5-[(5-phosphoribosylamino)methylideneamino] imidazole-4-carboxamide isomerase (245 aa).

Residue Asp-7 is the Proton acceptor of the active site. Asp-129 serves as the catalytic Proton donor.

This sequence belongs to the HisA/HisF family.

Its subcellular location is the cytoplasm. It carries out the reaction 1-(5-phospho-beta-D-ribosyl)-5-[(5-phospho-beta-D-ribosylamino)methylideneamino]imidazole-4-carboxamide = 5-[(5-phospho-1-deoxy-D-ribulos-1-ylimino)methylamino]-1-(5-phospho-beta-D-ribosyl)imidazole-4-carboxamide. It functions in the pathway amino-acid biosynthesis; L-histidine biosynthesis; L-histidine from 5-phospho-alpha-D-ribose 1-diphosphate: step 4/9. The polypeptide is 1-(5-phosphoribosyl)-5-[(5-phosphoribosylamino)methylideneamino] imidazole-4-carboxamide isomerase (Escherichia coli O45:K1 (strain S88 / ExPEC)).